Consider the following 489-residue polypeptide: Serine/threonine-protein kinase BSK3 (489 aa).

The N-myristoyl glycine moiety is linked to residue Gly2. Residues 58–324 enclose the Protein kinase domain; that stretch reads EYIVSEHGEK…ETEVLSHVLM (267 aa). ATP-binding positions include 64 to 72 and Lys86; that span reads HGEKAPNVV. Catalysis depends on Asp180, which acts as the Proton acceptor. Phosphoserine is present on Ser212.

The protein belongs to the protein kinase superfamily. Ser/Thr protein kinase family. Interacts with BRI1. Post-translationally, phosphorylated by BRI1 upon brassinolide (BL) treatment. Phosphorylated by ASK7/BIN2 and ASK9/BIL2.

The protein localises to the cell membrane. The catalysed reaction is L-seryl-[protein] + ATP = O-phospho-L-seryl-[protein] + ADP + H(+). It carries out the reaction L-threonyl-[protein] + ATP = O-phospho-L-threonyl-[protein] + ADP + H(+). Its function is as follows. Probable serine/threonine kinase that acts as a positive regulator of brassinosteroid (BR) signaling downstream of the receptor kinase BRI1. Mediates signal transduction from BRI1 by functioning as substrate of BRI1. Functions redundantly with BSK4, BSK6, BSK7 and BSK8. The polypeptide is Serine/threonine-protein kinase BSK3 (Arabidopsis thaliana (Mouse-ear cress)).